The sequence spans 188 residues: Protein SSX5 (188 aa).

In terms of domain architecture, KRAB-related spans 20–83 (KMQKAFDDIA…KRVADFQGND (64 aa)). Residues 78-188 (DFQGNDFDND…EISDPQEDDE (111 aa)) are disordered. Over residues 112 to 122 (TPEKPAEEGND) the composition is skewed to basic and acidic residues. Positions 144-155 (KLNTSEKVNKTS) are enriched in polar residues. Positions 156–170 (GPKRGKHAWTHRVRE) are enriched in basic residues. Acidic residues predominate over residues 179–188 (EISDPQEDDE).

The protein belongs to the SSX family.

Functionally, could act as a modulator of transcription. The protein is Protein SSX5 (SSX5) of Homo sapiens (Human).